Consider the following 404-residue polypeptide: Cysteine desulfurase IscS (404 aa).

Residues 75-76 (AT), Asn155, Gln183, and 203-205 (TSH) each bind pyridoxal 5'-phosphate. At Lys206 the chain carries N6-(pyridoxal phosphate)lysine. Position 243 (Thr243) interacts with pyridoxal 5'-phosphate. The Cysteine persulfide intermediate role is filled by Cys328. Cys328 contacts [2Fe-2S] cluster.

Belongs to the class-V pyridoxal-phosphate-dependent aminotransferase family. NifS/IscS subfamily. Homodimer. Forms a heterotetramer with IscU, interacts with other sulfur acceptors. Pyridoxal 5'-phosphate serves as cofactor.

It localises to the cytoplasm. The enzyme catalyses (sulfur carrier)-H + L-cysteine = (sulfur carrier)-SH + L-alanine. It functions in the pathway cofactor biosynthesis; iron-sulfur cluster biosynthesis. Master enzyme that delivers sulfur to a number of partners involved in Fe-S cluster assembly, tRNA modification or cofactor biosynthesis. Catalyzes the removal of elemental sulfur atoms from cysteine to produce alanine. Functions as a sulfur delivery protein for Fe-S cluster synthesis onto IscU, an Fe-S scaffold assembly protein, as well as other S acceptor proteins. The protein is Cysteine desulfurase IscS of Photobacterium profundum (strain SS9).